A 470-amino-acid polypeptide reads, in one-letter code: Putative multidrug resistance protein MdtD (470 aa).

Residues 1-11 (MTELPDNTRWQ) are Periplasmic-facing. A helical transmembrane segment spans residues 12–32 (LWIVALGFFMQSLDTTIVNTA). At 33–48 (LPSMAKSLGESPLHMH) the chain is on the cytoplasmic side. Residues 49–69 (MVVVSYVLTVAVMLPASGWLA) traverse the membrane as a helical segment. Residues 70–76 (DKIGVRN) lie on the Periplasmic side of the membrane. The helical transmembrane segment at 77 to 97 (IFFAAIVLFTLGSLFCALSGT) threads the bilayer. The Cytoplasmic segment spans residues 98–101 (LNQL). Residues 102–124 (VLARVLQGVGGAMMVPVGRLTVM) form a helical membrane-spanning segment. Topologically, residues 125–137 (KIVPRAQYMAAMT) are periplasmic. The helical transmembrane segment at 138–158 (FVTLPGQIGPLLGPALGGVLV) threads the bilayer. Residues 159-164 (EYASWH) lie on the Cytoplasmic side of the membrane. Residues 165–185 (WIFLINIPVGIVGAMATFMLM) form a helical membrane-spanning segment. Topologically, residues 186 to 196 (PNYTIETRRFD) are periplasmic. The chain crosses the membrane as a helical span at residues 197-217 (LPGFLLLAIGMAVLTLALDGS). Over 218–221 (KSMG) the chain is Cytoplasmic. A helical transmembrane segment spans residues 222 to 242 (ISPWTLAGLAAGGAAAILLYL). Over 243-262 (LHAKKNSGALFSLRLFCTPT) the chain is Periplasmic. Residues 263–283 (FSLGLLGSFAGRIGSGMLPFM) traverse the membrane as a helical segment. At 284–285 (TP) the chain is on the cytoplasmic side. Residues 286–306 (VFLQIGLGFSPFHAGLMMIPM) form a helical membrane-spanning segment. At 307–341 (VLGSMGMKRIVVQIVNRFGYRRVLVATTLGLALVS) the chain is on the periplasmic side. The chain crosses the membrane as a helical span at residues 342 to 362 (LLFMSVALLGWYYLLPLVLLL). Over 363-395 (QGMVNSARFSSMNTLTLKDLPDTLASSGNSLLS) the chain is Cytoplasmic. Residues 396–416 (MIMQLSMSIGVTIAGMLLGMF) form a helical membrane-spanning segment. The Periplasmic portion of the chain corresponds to 417 to 430 (GQQHIGIDSSATHH). The helical transmembrane segment at 431 to 451 (VFMYTWLCMAVIIALPAIIFA) threads the bilayer. Topologically, residues 452 to 470 (RVPNDTQQNMVISRRKRSL) are cytoplasmic.

It belongs to the major facilitator superfamily. TCR/Tet family.

It is found in the cell inner membrane. The sequence is that of Putative multidrug resistance protein MdtD from Salmonella paratyphi B (strain ATCC BAA-1250 / SPB7).